The primary structure comprises 1101 residues: MDVGTMGSRAELLAISIQFGGLWVFRDLLQMNPLFEQDHVFCTFNHPNMGLVLISFAKVDGHILAAYALSKLGPDTFSICYPFSSKLDAFAQTLDLEWQIASMHKEAAACVYEFLCVESVCLHTGENWRESVIEPEYASYIFDTINVFQSSSLTRELYSLGEPNGVREFVVDAIFDIKVDNSWWEDPSNSYWKTVIGSREMFEDSRKKTSSPSPSFASSKDAGTIPAIQKKKSLLIEMMETESTYVERLRHLVNDYALPLRDLAKSSKKLLGLYELNTLFPPCLNKLIQLNSAFLDEFEAIMSDLNFEDIDEKKFEEIDLRLACCFESHFFAFSQHYPRYLEQSNDFGNVLKMASKIPKFVEFHDQVKLNANMNVGLSQLIMEPVQRIPRYSLFLDQIILLTQEGECQHTYVRSVEIIKNIAEMPTVDAEERSRIFAGLQHIIPDLAPNMISNSRNFIDCIDVTREFLKNGQLHLIPYTLILFNDRICLVQRRSKSSIASTILDLRKQNPRNSYSKEKRAQYIGSNMNEAVELTRSMVEENTIFLISKYASSPSFFNEYPILKFRCDFENVRTMDRFYQSFQKALSMNKSQPSCLSFSKLNDFVVFFNNYSRFEYEKESKRSDIVCICTNDANVDKHKFLQDGNIVITFFQQDEDFHLSFDSWLGVSLPTEAVIAKEDLREACLNYLINIKRLLLCPFSNRNFSSLDLYSNLIQHLLSANSSPRKSRLSFGGRPGSPSKISLSLNRFYNQGGLSKSCATLPSQMYNLDHNNISQKSLKFNTHNTSKASAEKTVEHLEAFKGGFKYHTDLKNLLYPLSEKEKIEGDELYDNILKETFNEELLSHYPPNIIYATFQKYLSSFINRKFGVLLSSSFIQQLNTVENLNLSFNSTDAVYHLKKILQDLPESSLKILENIFSIASDLLLRLPLKDQCDFVTKQLAIALAPSMFGSNAVELVYYLAYHSDRIFGTVEELPTPVSPANSNNDKQLDESKFQAIAMKEMPERHPKEILPGQIEREAYEDLRRKYHLTLARLAQMTRLNEDSKKSIPLLYDRFNHDLKLIKQSVQASLIRKQCELDTAKWTLEEYESKLNAKEGCQTNIFI.

The interval 203–222 (EDSRKKTSSPSPSFASSKDA) is disordered. Residues 210–219 (SSPSPSFASS) show a composition bias toward low complexity. Positions 230–428 (KKKSLLIEMM…KNIAEMPTVD (199 aa)) constitute a DH domain. S736 and S977 each carry phosphoserine.

The protein localises to the cytoplasm. It is found in the cytoskeleton. It localises to the microtubule organizing center. The protein resides in the spindle pole body. Its function is as follows. Has a role in the control of cell polarity and cytokinesis. Involved in bipolar growth and septum formation. This chain is Rho guanine nucleotide exchange factor gef2 (gef2), found in Schizosaccharomyces pombe (strain 972 / ATCC 24843) (Fission yeast).